A 320-amino-acid polypeptide reads, in one-letter code: GRAM domain-containing protein 2A (320 aa).

The disordered stretch occupies residues 33–56 (TEKPGKVQEPPDDGSLHWSEGSKG). Residues 74–141 (QQYHKLFKDI…VSVQLIKKHK (68 aa)) form the GRAM domain. The helical transmembrane segment at 278–298 (LLKVIFVMICFLVLSSSYLAF) threads the bilayer.

Post-translationally, phosphorylated.

The protein resides in the endoplasmic reticulum membrane. The protein localises to the cell membrane. Its function is as follows. Participates in the organization ofendoplasmic reticulum-plasma membrane contact sites (EPCS) with pleiotropic functions including STIM1 recruitment and calcium homeostasis. Constitutive tether that co-localize with ESYT2/3 tethers at endoplasmic reticulum-plasma membrane contact sites in a phosphatidylinositol lipid-dependent manner. Pre-marks the subset of phosphtidylinositol 4,5-biphosphate (PI(4,5)P2)-enriched EPCS destined for the store operated calcium entry pathway (SOCE). The sequence is that of GRAM domain-containing protein 2A from Mus musculus (Mouse).